Reading from the N-terminus, the 435-residue chain is Transcription factor gkaF (435 aa).

Residues 1–19 (MGRPQRGDTAKERRERQDK) show a composition bias toward basic and acidic residues. Disordered regions lie at residues 1–40 (MGRP…TVDW), 115–158 (STTA…SSQS), and 231–257 (FSSE…FLAP). Over residues 28-40 (PISQSGLSDTVDW) the composition is skewed to polar residues. Residues 143 to 158 (SQSSDSSKPSSTSSQS) show a composition bias toward low complexity.

The protein resides in the nucleus. Functionally, transcription factor; part of the gene cluster that mediates the biosynthesis of GKK1032, fungal natural products containing a macrocyclic para-cyclophane connected to a decahydrofluorene ring system that show potent antitumor activities. This chain is Transcription factor gkaF, found in Penicillium citrinum.